A 473-amino-acid chain; its full sequence is Ribulose bisphosphate carboxylase large chain (473 aa).

The propeptide occupies 1 to 2 (MS). Proline 3 is modified (N-acetylproline). Lysine 14 is modified (N6,N6,N6-trimethyllysine). Substrate-binding residues include asparagine 123 and threonine 173. The active-site Proton acceptor is the lysine 175. Residue lysine 177 coordinates substrate. Positions 201, 203, and 204 each coordinate Mg(2+). Lysine 201 is modified (N6-carboxylysine). Histidine 294 serves as the catalytic Proton acceptor. Substrate-binding residues include arginine 295, histidine 327, and serine 379.

It belongs to the RuBisCO large chain family. Type I subfamily. Heterohexadecamer of 8 large chains and 8 small chains; disulfide-linked. The disulfide link is formed within the large subunit homodimers. Mg(2+) serves as cofactor. The disulfide bond which can form in the large chain dimeric partners within the hexadecamer appears to be associated with oxidative stress and protein turnover.

It localises to the plastid. It is found in the chloroplast. The catalysed reaction is 2 (2R)-3-phosphoglycerate + 2 H(+) = D-ribulose 1,5-bisphosphate + CO2 + H2O. The enzyme catalyses D-ribulose 1,5-bisphosphate + O2 = 2-phosphoglycolate + (2R)-3-phosphoglycerate + 2 H(+). Its function is as follows. RuBisCO catalyzes two reactions: the carboxylation of D-ribulose 1,5-bisphosphate, the primary event in carbon dioxide fixation, as well as the oxidative fragmentation of the pentose substrate in the photorespiration process. Both reactions occur simultaneously and in competition at the same active site. This chain is Ribulose bisphosphate carboxylase large chain, found in Vigna unguiculata (Cowpea).